A 183-amino-acid polypeptide reads, in one-letter code: ATP synthase subunit delta (183 aa).

It belongs to the ATPase delta chain family. F-type ATPases have 2 components, F(1) - the catalytic core - and F(0) - the membrane proton channel. F(1) has five subunits: alpha(3), beta(3), gamma(1), delta(1), epsilon(1). F(0) has three main subunits: a(1), b(2) and c(10-14). The alpha and beta chains form an alternating ring which encloses part of the gamma chain. F(1) is attached to F(0) by a central stalk formed by the gamma and epsilon chains, while a peripheral stalk is formed by the delta and b chains.

The protein localises to the cell inner membrane. F(1)F(0) ATP synthase produces ATP from ADP in the presence of a proton or sodium gradient. F-type ATPases consist of two structural domains, F(1) containing the extramembraneous catalytic core and F(0) containing the membrane proton channel, linked together by a central stalk and a peripheral stalk. During catalysis, ATP synthesis in the catalytic domain of F(1) is coupled via a rotary mechanism of the central stalk subunits to proton translocation. Functionally, this protein is part of the stalk that links CF(0) to CF(1). It either transmits conformational changes from CF(0) to CF(1) or is implicated in proton conduction. The chain is ATP synthase subunit delta from Oleidesulfovibrio alaskensis (strain ATCC BAA-1058 / DSM 17464 / G20) (Desulfovibrio alaskensis).